Consider the following 276-residue polypeptide: Large ribosomal subunit protein uL2 (276 aa).

The segment at Lys208–Lys276 is disordered. The span at Asp230–Lys240 shows a compositional bias: basic and acidic residues. The span at Lys255 to Lys276 shows a compositional bias: basic residues.

This sequence belongs to the universal ribosomal protein uL2 family. Part of the 50S ribosomal subunit. Forms a bridge to the 30S subunit in the 70S ribosome.

One of the primary rRNA binding proteins. Required for association of the 30S and 50S subunits to form the 70S ribosome, for tRNA binding and peptide bond formation. It has been suggested to have peptidyltransferase activity; this is somewhat controversial. Makes several contacts with the 16S rRNA in the 70S ribosome. The sequence is that of Large ribosomal subunit protein uL2 from Campylobacter lari (strain RM2100 / D67 / ATCC BAA-1060).